Here is a 205-residue protein sequence, read N- to C-terminus: Putative 3-methyladenine DNA glycosylase (205 aa).

The protein belongs to the DNA glycosylase MPG family.

The sequence is that of Putative 3-methyladenine DNA glycosylase from Bacillus cereus (strain ZK / E33L).